A 265-amino-acid polypeptide reads, in one-letter code: uncharacterized protein (265 aa).

The stretch at 143 to 205 (ATQKALKDSI…EKLIKSVEKA (63 aa)) forms a coiled coil.

This is an uncharacterized protein from Aquifex aeolicus (strain VF5).